The chain runs to 709 residues: Alpha-1,2-mannosyltransferase MNN24 (709 aa).

The Cytoplasmic segment spans residues 1–9 (MFSIPVSSK). A helical membrane pass occupies residues 10–30 (TVRLILVSLLLITLINILAAF). At 31 to 709 (QRSTLSSWFP…KNHIEFLEIS (679 aa)) the chain is on the extracellular side. Asparagine 317 is a glycosylation site (N-linked (GlcNAc...) asparagine).

Belongs to the MNN1/MNT family.

Its subcellular location is the golgi apparatus membrane. It participates in protein modification; protein glycosylation. Functionally, alpha-1,2-mannosyltransferase required for cell wall integrity. Responsible for addition of the first alpha-1,2-linked mannose to form the branches on the mannan backbone of oligosaccharides. Addition of alpha-1,2-mannose is required for stabilization of the alpha-1,6-mannose backbone and hence regulates mannan fibril length; and is important for both immune recognition and virulence. The protein is Alpha-1,2-mannosyltransferase MNN24 (MNN24) of Candida albicans (strain SC5314 / ATCC MYA-2876) (Yeast).